The following is a 110-amino-acid chain: Large ribosomal subunit protein uL22 (110 aa).

It belongs to the universal ribosomal protein uL22 family. In terms of assembly, part of the 50S ribosomal subunit.

This protein binds specifically to 23S rRNA; its binding is stimulated by other ribosomal proteins, e.g. L4, L17, and L20. It is important during the early stages of 50S assembly. It makes multiple contacts with different domains of the 23S rRNA in the assembled 50S subunit and ribosome. In terms of biological role, the globular domain of the protein is located near the polypeptide exit tunnel on the outside of the subunit, while an extended beta-hairpin is found that lines the wall of the exit tunnel in the center of the 70S ribosome. This chain is Large ribosomal subunit protein uL22, found in Methylococcus capsulatus (strain ATCC 33009 / NCIMB 11132 / Bath).